A 480-amino-acid polypeptide reads, in one-letter code: MTLSFTARWRDELPATYTALLPTPLKNARLIWYNDKLAQQLAIPASLFDVTNGAGVWGGETLLPGMSPVAQVCSGHQFGVWAGQLGDGRGILLGEQLLADGSTLDWHLKGAGLTPYSRMGDGRAVLRSTIRESLASEAMHYLGIPTTRALSIVASDTPVQRETQETGAMLMRLAQSHMRFGHFEHFYYRREPEKVQQLADFAIRHYWPQWQDVPEKYVLWFEEVAARTGRLIAEWQTVGFSHGVMNTDNMSILGLTIDYGPFGFLDDYDPGFIGNHSDHQGRYRFDNQPSVALWNLQRLAQTLTPFIEIDALNRALDRYQDALLTHYGQRMRQKLGFFTEQKDDNVLLNELFSLMAREGSDYSRTFRMLSHTEQQSASSPLRDTFIDRAAFDAWFDRYRARLRTEAVDDALRQQQMQRVNPAVVLRNWLAQRAIDAAEQGDMAELHWLHEVLRQPFTDRDDDYASRPPEWGKRLEVSCSS.

Residues G86, G88, R89, K109, D121, G122, R172, and R179 each contribute to the ATP site. D248 acts as the Proton acceptor in catalysis. Mg(2+)-binding residues include N249 and D258. D258 provides a ligand contact to ATP.

Belongs to the SELO family. Mg(2+) serves as cofactor. Requires Mn(2+) as cofactor.

The catalysed reaction is L-seryl-[protein] + ATP = 3-O-(5'-adenylyl)-L-seryl-[protein] + diphosphate. The enzyme catalyses L-threonyl-[protein] + ATP = 3-O-(5'-adenylyl)-L-threonyl-[protein] + diphosphate. It catalyses the reaction L-tyrosyl-[protein] + ATP = O-(5'-adenylyl)-L-tyrosyl-[protein] + diphosphate. It carries out the reaction L-histidyl-[protein] + UTP = N(tele)-(5'-uridylyl)-L-histidyl-[protein] + diphosphate. The catalysed reaction is L-seryl-[protein] + UTP = O-(5'-uridylyl)-L-seryl-[protein] + diphosphate. The enzyme catalyses L-tyrosyl-[protein] + UTP = O-(5'-uridylyl)-L-tyrosyl-[protein] + diphosphate. Functionally, nucleotidyltransferase involved in the post-translational modification of proteins. It can catalyze the addition of adenosine monophosphate (AMP) or uridine monophosphate (UMP) to a protein, resulting in modifications known as AMPylation and UMPylation. The chain is Protein nucleotidyltransferase YdiU from Salmonella choleraesuis (strain SC-B67).